Here is a 933-residue protein sequence, read N- to C-terminus: Protein translocase subunit SecA (933 aa).

ATP contacts are provided by residues Gln-87, 105–109 (GEGKT), and Asp-515. 4 residues coordinate Zn(2+): Cys-917, Cys-919, Cys-928, and His-929.

This sequence belongs to the SecA family. As to quaternary structure, monomer and homodimer. Part of the essential Sec protein translocation apparatus which comprises SecA, SecYEG and auxiliary proteins SecDF-YajC and YidC. It depends on Zn(2+) as a cofactor.

It localises to the cell inner membrane. The protein resides in the cytoplasm. The catalysed reaction is ATP + H2O + cellular proteinSide 1 = ADP + phosphate + cellular proteinSide 2.. Part of the Sec protein translocase complex. Interacts with the SecYEG preprotein conducting channel. Has a central role in coupling the hydrolysis of ATP to the transfer of proteins into and across the cell membrane, serving both as a receptor for the preprotein-SecB complex and as an ATP-driven molecular motor driving the stepwise translocation of polypeptide chains across the membrane. This Burkholderia cenocepacia (strain ATCC BAA-245 / DSM 16553 / LMG 16656 / NCTC 13227 / J2315 / CF5610) (Burkholderia cepacia (strain J2315)) protein is Protein translocase subunit SecA.